The following is a 362-amino-acid chain: Spermidine/putrescine import ATP-binding protein PotA (362 aa).

One can recognise an ABC transporter domain in the interval 6–237 (ISFKHVVKSY…PINHYVADFI (232 aa)). 39–46 (GPSGCGKT) lines the ATP pocket.

This sequence belongs to the ABC transporter superfamily. Spermidine/putrescine importer (TC 3.A.1.11.1) family. The complex is composed of two ATP-binding proteins (PotA), two transmembrane proteins (PotB and PotC) and a solute-binding protein (PotD).

It localises to the cell membrane. It catalyses the reaction ATP + H2O + polyamine-[polyamine-binding protein]Side 1 = ADP + phosphate + polyamineSide 2 + [polyamine-binding protein]Side 1.. In terms of biological role, part of the ABC transporter complex PotABCD involved in spermidine/putrescine import. Responsible for energy coupling to the transport system. This chain is Spermidine/putrescine import ATP-binding protein PotA, found in Ligilactobacillus salivarius (strain UCC118) (Lactobacillus salivarius).